We begin with the raw amino-acid sequence, 308 residues long: Cytochrome b (308 aa).

Helical transmembrane passes span Phe-1–Met-21, Trp-45–Ile-66, Trp-81–Leu-101, and Phe-146–Thr-166. Residues His-51 and His-65 each contribute to the heme b site. Residues His-150 and His-164 each contribute to the heme b site. Residue His-169 participates in a ubiquinone binding. The next 3 membrane-spanning stretches (helical) occupy residues Thr-194–Ser-214, Leu-256–His-276, and Leu-288–Ser-308.

The protein belongs to the cytochrome b family. The cytochrome bc1 complex contains 11 subunits: 3 respiratory subunits (MT-CYB, CYC1 and UQCRFS1), 2 core proteins (UQCRC1 and UQCRC2) and 6 low-molecular weight proteins (UQCRH/QCR6, UQCRB/QCR7, UQCRQ/QCR8, UQCR10/QCR9, UQCR11/QCR10 and a cleavage product of UQCRFS1). This cytochrome bc1 complex then forms a dimer. Heme b is required as a cofactor.

Its subcellular location is the mitochondrion inner membrane. Its function is as follows. Component of the ubiquinol-cytochrome c reductase complex (complex III or cytochrome b-c1 complex) that is part of the mitochondrial respiratory chain. The b-c1 complex mediates electron transfer from ubiquinol to cytochrome c. Contributes to the generation of a proton gradient across the mitochondrial membrane that is then used for ATP synthesis. This chain is Cytochrome b (MT-CYB), found in Baeolophus inornatus (Oak titmouse).